Consider the following 229-residue polypeptide: MAIGKRLKKIREGIDRTKLYPLDEAVKLVKERAISKFDETIEVAINLGVDPRHADQMVRGVVMLPNGTGRTVRVGVFARGAKADEAKAAGADVVGAEDLVEQVQAGNINFDRCIATPDMMPLVGRLGKVLGPRGMMPNPKIGTVTMDVAGAVKGAKGGSVEFRVEKAGIIQAGVGKASFDADKLVENIKALADAVNKAKPSGAKGTYIQRVAVSSTMGPGVKVEPGTVH.

As to quaternary structure, part of the 50S ribosomal subunit.

Binds directly to 23S rRNA. The L1 stalk is quite mobile in the ribosome, and is involved in E site tRNA release. Its function is as follows. Protein L1 is also a translational repressor protein, it controls the translation of the L11 operon by binding to its mRNA. In Rhodopseudomonas palustris (strain ATCC BAA-98 / CGA009), this protein is Large ribosomal subunit protein uL1.